Here is a 532-residue protein sequence, read N- to C-terminus: Pre-piRNA 3'-exonuclease trimmer (532 aa).

The Mg(2+) site is built by aspartate 28, glutamate 30, aspartate 270, and aspartate 365. The chain crosses the membrane as a helical span at residues 503-523; sequence AGRFAIWSGSIVTGGLALYLI.

It belongs to the CAF1 family. In terms of assembly, interacts with Papi/Tdrkh; interaction takes place on the mitochondrial surface and recruits PNLDC1/trimmer to PIWI-bound pre-piRNAs. The cofactor is Mg(2+).

The protein localises to the mitochondrion outer membrane. 3'-5' exonuclease that specifically cleaves precursor piRNAs (pre-piRNAs) at their 3' ends. Trims pre-piRNAs to their mature size, a process required for piRNAs maturation and stabilization, and subsequent pre-piRNAs 2'-O-methylation. The piRNA metabolic process mediates the repression of transposable elements during meiosis by forming complexes composed of piRNAs and Piwi proteins and govern the methylation and subsequent repression of transposons. The sequence is that of Pre-piRNA 3'-exonuclease trimmer from Bombyx mori (Silk moth).